Reading from the N-terminus, the 985-residue chain is Serine/threonine-protein kinase N2 (985 aa).

In terms of domain architecture, REM-1 1 spans 33 to 109 (KLDFSDTIVQ…LQELNAHIVV (77 aa)). Lys-77 bears the N6-acetyllysine mark. Ser-110 is subject to Phosphoserine. Positions 111 to 136 (DPEDYTDCPRTPDTPNSDSRSSTSNN) are disordered. 2 positions are modified to phosphothreonine: Thr-121 and Thr-124. Over residues 121 to 136 (TPDTPNSDSRSSTSNN) the composition is skewed to low complexity. REM-1 domains are found at residues 121 to 204 (TPDT…TNEL) and 207 to 286 (DNAK…ELPK). A phosphoserine mark is found at Ser-303, Ser-307, Ser-361, and Ser-363. The disordered stretch occupies residues 352–383 (ATSVALPGWSPSENRSSFMSRTSKSKSGSSRN). The region spanning 354-474 (SVALPGWSPS…LYLEPQGTLF (121 aa)) is the C2 domain. Residues 366-382 (RSSFMSRTSKSKSGSSR) are compositionally biased toward low complexity. The interval 383–464 (NLLKTDDLSN…FLDNQRHGMA (82 aa)) is necessary to rescue apical junction formation. 4 positions are modified to phosphoserine: Ser-536, Ser-584, Ser-621, and Ser-632. A disordered region spans residues 570–590 (DLEPEAPPAPPRASSLGEIDD). The Protein kinase domain maps to 658-917 (FRCCAVLGRG…AEDVKKHPFF (260 aa)). ATP-binding positions include 664–672 (LGRGHFGKV) and Lys-687. Residue Asp-783 is the Proton acceptor of the active site. Position 817 is a phosphothreonine; by PDPK1 (Thr-817). A necessary for the catalytic activity region spans residues 918–978 (RLTDWSALLD…EEEQEMFRDF (61 aa)). One can recognise an AGC-kinase C-terminal domain in the interval 918-985 (RLTDWSALLD…RDFDYVADWC (68 aa)). The residue at position 953 (Ser-953) is a Phosphoserine. Position 959 is a phosphothreonine (Thr-959). The interval 979 to 985 (DYVADWC) is negatively regulates the responsiveness of the catalytic activity by cardiolipin and is required for optimal activation by the GTP-bound RhoA.

Belongs to the protein kinase superfamily. AGC Ser/Thr protein kinase family. PKC subfamily. Interacts (via the REM repeats) with RHOA (GTP-bound form preferentially) and interacts (via the REM repeats) with RAC1 (GTP-bound form preferentially); the interactions induce its autophosphorylation. Interacts with RHOC. Interacts with NCK1 (via SH3 domains) and NCK2. Interacts with CD44. Interacts (via C-terminal kinase domain) with PDPK1; the interaction stimulates PDPK1 kinase activity. Interacts with MAP3K2; the interaction activates PRK2 kinase activity in a MAP3K2-independent kinase activity. Interacts (via C-terminal domain) with AKT1; the interaction occurs with the C-terminal cleavage product of PRK2 in apoptotic cells. Interacts (via C-terminus) with PTPN13 (via PDZ 3 domain). Interacts with CDK10. Phosphorylated during mitosis. Autophosphorylated. Phosphorylated. Binding to Rho and Rac promotes autophosphorylation and phosphorylation on serine and threonine residues. Phosphorylated by CDK10. Post-translationally, proteolytically cleaved by caspase-3 during the induction of apoptotic cell death. Activated by limited proteolysis with trypsin. Expressed in liver (at protein level).

Its subcellular location is the cytoplasm. The protein localises to the nucleus. The protein resides in the membrane. It localises to the cell projection. It is found in the lamellipodium. Its subcellular location is the cytoskeleton. The protein localises to the cleavage furrow. The protein resides in the midbody. It localises to the cell junction. The enzyme catalyses L-seryl-[protein] + ATP = O-phospho-L-seryl-[protein] + ADP + H(+). It catalyses the reaction L-threonyl-[protein] + ATP = O-phospho-L-threonyl-[protein] + ADP + H(+). Kinase activity is activated upon binding to GTP-bound Rho1/Rac1 GTPases. Activated by caspase-3 (CASP3) cleavage during apoptosis. Activated by lipids, particularly cardiolipin and to a lesser extent by other acidic phospholipids and unsaturated fatty acids. Two specific sites, Thr-817 (activation loop of the kinase domain) and Thr-959 (turn motif), need to be phosphorylated for its full activation. In terms of biological role, PKC-related serine/threonine-protein kinase and Rho/Rac effector protein that participates in specific signal transduction responses in the cell. Plays a role in the regulation of cell cycle progression, actin cytoskeleton assembly, cell migration, cell adhesion, tumor cell invasion and transcription activation signaling processes. Phosphorylates CTTN in hyaluronan-induced astrocytes and hence decreases CTTN ability to associate with filamentous actin. Phosphorylates HDAC5, therefore lead to impair HDAC5 import. Direct RhoA target required for the regulation of the maturation of primordial junctions into apical junction formation in bronchial epithelial cells. Required for G2/M phases of the cell cycle progression and abscission during cytokinesis in a ECT2-dependent manner. Stimulates FYN kinase activity that is required for establishment of skin cell-cell adhesion during keratinocytes differentiation. Regulates epithelial bladder cells speed and direction of movement during cell migration and tumor cell invasion. Inhibits Akt pro-survival-induced kinase activity. Mediates Rho protein-induced transcriptional activation via the c-fos serum response factor (SRF). Involved in the negative regulation of ciliogenesis. The chain is Serine/threonine-protein kinase N2 (Pkn2) from Rattus norvegicus (Rat).